We begin with the raw amino-acid sequence, 526 residues long: Peptide chain release factor 3 (526 aa).

Positions 9 to 277 (DKRRTFAIIS…GIVEWAPKPL (269 aa)) constitute a tr-type G domain. Residues 18–25 (SHPDAGKT), 86–90 (DTPGH), and 140–143 (NKLD) contribute to the GTP site.

It belongs to the TRAFAC class translation factor GTPase superfamily. Classic translation factor GTPase family. PrfC subfamily.

The protein resides in the cytoplasm. In terms of biological role, increases the formation of ribosomal termination complexes and stimulates activities of RF-1 and RF-2. It binds guanine nucleotides and has strong preference for UGA stop codons. It may interact directly with the ribosome. The stimulation of RF-1 and RF-2 is significantly reduced by GTP and GDP, but not by GMP. This Shewanella putrefaciens (strain CN-32 / ATCC BAA-453) protein is Peptide chain release factor 3.